The chain runs to 206 residues: MQEGDYEKAAEAFTKAIEENKEDAIPYINFANLLSSVNELERALAFYDKALELDSSAATAYYGAGNVYVVKEMYKEAKDMFEKALRAGMENGDLFYMLGTVLVKLEQPKLALPYLQRAVELNENDTEARFQFGMCLANEGMLDEALSQFAAVTEQDPGHADAFYNAGVTYAYKENREKALEMLDKAIDIQPDHMLALHAKKLIDPS.

TPR repeat units lie at residues 1–23, 24–57, 59–91, 93–125, 127–159, and 160–193; these read MQEGDYEKAAEAFTKAIEENKED, AIPYINFANLLSSVNELERALAFYDKALELDSSA, TAYYGAGNVYVVKEMYKEAKDMFEKALRAGMEN, DLFYMLGTVLVKLEQPKLALPYLQRAVELNEND, EARFQFGMCLANEGMLDEALSQFAAVTEQDPGH, and ADAFYNAGVTYAYKENREKALEMLDKAIDIQPDH.

Monomer.

Functionally, could be an interacting mediator in the complex formation among RNA sulfuration components, RNA processing components, and aminoacyl-tRNA synthetases. The chain is TPR repeat-containing protein YrrB (yrrB) from Bacillus subtilis (strain 168).